We begin with the raw amino-acid sequence, 419 residues long: Tyrosine--tRNA ligase (419 aa).

Y36 contributes to the L-tyrosine binding site. Positions P41–H50 match the 'HIGH' region motif. Residues Y168 and Q172 each contribute to the L-tyrosine site. Positions K230 to T234 match the 'KMSKS' region motif. K233 contacts ATP. An S4 RNA-binding domain is found at K352–K419.

Belongs to the class-I aminoacyl-tRNA synthetase family. TyrS type 1 subfamily. As to quaternary structure, homodimer.

The protein localises to the cytoplasm. The enzyme catalyses tRNA(Tyr) + L-tyrosine + ATP = L-tyrosyl-tRNA(Tyr) + AMP + diphosphate + H(+). Functionally, catalyzes the attachment of tyrosine to tRNA(Tyr) in a two-step reaction: tyrosine is first activated by ATP to form Tyr-AMP and then transferred to the acceptor end of tRNA(Tyr). This is Tyrosine--tRNA ligase from Latilactobacillus sakei subsp. sakei (strain 23K) (Lactobacillus sakei subsp. sakei).